We begin with the raw amino-acid sequence, 372 residues long: Adaptive-response sensory kinase SasA (372 aa).

In terms of domain architecture, Histidine kinase spans 147-360 (MVAHELRTPL…CFHFTVPVWQ (214 aa)). His150 is subject to Phosphohistidine; by autocatalysis.

As to quaternary structure, homooligomerizes. Interacts with KaiC. Participates in the KaiBC complex, whose core is composed of a KaiC homohexamer and 6 KaiB.

The enzyme catalyses ATP + protein L-histidine = ADP + protein N-phospho-L-histidine.. Functionally, member of the two-component regulatory system SasA/RpaA involved in genome-wide circadian gene expression. One of several clock output pathways. Participates in the Kai clock protein complex, the main circadian regulator in cyanobacteria, via its interaction with KaiC. KaiC enhances the autophosphorylation activity of SasA, which then transfers its phosphate group to RpaA to activate it. In addition to its output function, recruits fold-shifted KaiB (KaiB(fs)) to KaiC to cooperatively form the KaiB(6):KaiC(6) complex (independent of SasA kinase activity). Required for robustness of the circadian rhythm of gene expression and is involved in clock output, also required for adaptation to light/dark cycles. The polypeptide is Adaptive-response sensory kinase SasA (Prochlorococcus marinus (strain MIT 9215)).